A 106-amino-acid chain; its full sequence is MSLLAYAAAALAEIAGCFAFWAWMRLGRSAWWTLPGLASLAAFAALLTLVDSPAAGRTFAAYGGVYVAASVLWLWLAEGQRPDRWDLAGSAVCLAGTALILLGRRG.

The next 4 helical transmembrane spans lie at 3–23 (LLAY…FWAW), 30–50 (AWWT…LTLV), 59–79 (FAAY…LAEG), and 87–104 (LAGS…LLGR).

The protein belongs to the UPF0060 family.

The protein resides in the cell inner membrane. The protein is UPF0060 membrane protein Mrad2831_0929 of Methylobacterium radiotolerans (strain ATCC 27329 / DSM 1819 / JCM 2831 / NBRC 15690 / NCIMB 10815 / 0-1).